Consider the following 445-residue polypeptide: Glutamate-1-semialdehyde 2,1-aminomutase (445 aa).

Residue lysine 281 is modified to N6-(pyridoxal phosphate)lysine.

The protein belongs to the class-III pyridoxal-phosphate-dependent aminotransferase family. HemL subfamily. As to quaternary structure, homodimer. Pyridoxal 5'-phosphate serves as cofactor.

Its subcellular location is the cytoplasm. The enzyme catalyses (S)-4-amino-5-oxopentanoate = 5-aminolevulinate. It functions in the pathway porphyrin-containing compound metabolism; protoporphyrin-IX biosynthesis; 5-aminolevulinate from L-glutamyl-tRNA(Glu): step 2/2. In Nocardioides sp. (strain ATCC BAA-499 / JS614), this protein is Glutamate-1-semialdehyde 2,1-aminomutase.